The primary structure comprises 166 residues: Small ribosomal subunit protein uS5 (166 aa).

The S5 DRBM domain occupies 11–74 (LEDRVVSINR…EDAKKNLINV (64 aa)).

This sequence belongs to the universal ribosomal protein uS5 family. Part of the 30S ribosomal subunit. Contacts proteins S4 and S8.

In terms of biological role, with S4 and S12 plays an important role in translational accuracy. Functionally, located at the back of the 30S subunit body where it stabilizes the conformation of the head with respect to the body. The chain is Small ribosomal subunit protein uS5 from Latilactobacillus sakei subsp. sakei (strain 23K) (Lactobacillus sakei subsp. sakei).